A 118-amino-acid chain; its full sequence is Large ribosomal subunit protein uL18 (118 aa).

It belongs to the universal ribosomal protein uL18 family. As to quaternary structure, part of the 50S ribosomal subunit; part of the 5S rRNA/L5/L18/L25 subcomplex. Contacts the 5S and 23S rRNAs.

In terms of biological role, this is one of the proteins that bind and probably mediate the attachment of the 5S RNA into the large ribosomal subunit, where it forms part of the central protuberance. This Campylobacter hominis (strain ATCC BAA-381 / DSM 21671 / CCUG 45161 / LMG 19568 / NCTC 13146 / CH001A) protein is Large ribosomal subunit protein uL18.